The sequence spans 123 residues: Large ribosomal subunit protein bL17 (123 aa).

This sequence belongs to the bacterial ribosomal protein bL17 family. As to quaternary structure, part of the 50S ribosomal subunit. Contacts protein L32.

In Staphylococcus haemolyticus (strain JCSC1435), this protein is Large ribosomal subunit protein bL17.